The primary structure comprises 248 residues: Ribosomal RNA small subunit methyltransferase J (248 aa).

S-adenosyl-L-methionine-binding positions include 101–102 (RD), 117–118 (ER), 153–154 (SS), and aspartate 171.

It belongs to the methyltransferase superfamily. RsmJ family.

The protein resides in the cytoplasm. The catalysed reaction is guanosine(1516) in 16S rRNA + S-adenosyl-L-methionine = N(2)-methylguanosine(1516) in 16S rRNA + S-adenosyl-L-homocysteine + H(+). Functionally, specifically methylates the guanosine in position 1516 of 16S rRNA. The chain is Ribosomal RNA small subunit methyltransferase J from Pectobacterium atrosepticum (strain SCRI 1043 / ATCC BAA-672) (Erwinia carotovora subsp. atroseptica).